The chain runs to 115 residues: Large ribosomal subunit protein bL19 (115 aa).

The protein belongs to the bacterial ribosomal protein bL19 family.

This protein is located at the 30S-50S ribosomal subunit interface and may play a role in the structure and function of the aminoacyl-tRNA binding site. The chain is Large ribosomal subunit protein bL19 from Streptococcus suis (strain 98HAH33).